A 393-amino-acid chain; its full sequence is uncharacterized protein (393 aa).

In terms of domain architecture, OBG-type G spans 2-266; the sequence is AMIGLVGKPN…AEKAGIIKRK (265 aa). GTP contacts are provided by residues 8–15 and 78–82; these read GKPNVGKS and DVAGL. One can recognise a TGS domain in the interval 314 to 390; the sequence is DMIVVYPVED…KHNDIIKIVS (77 aa).

Belongs to the TRAFAC class OBG-HflX-like GTPase superfamily. OBG GTPase family.

This is an uncharacterized protein from Methanocaldococcus jannaschii (strain ATCC 43067 / DSM 2661 / JAL-1 / JCM 10045 / NBRC 100440) (Methanococcus jannaschii).